We begin with the raw amino-acid sequence, 1178 residues long: Mediator of RNA polymerase II transcription subunit 14 (1178 aa).

Residues 1–12 show a composition bias toward polar residues; the sequence is MDNSVHNNSNTT. 2 disordered regions span residues 1 to 50 and 1064 to 1178; these read MDNS…PITV and LAGT…VVLD. Low complexity-rich tracts occupy residues 1074–1112 and 1119–1164; these read PTQI…QGAA and HQLQ…AQQR.

The protein belongs to the Mediator complex subunit 14 family. Component of the Mediator complex.

The protein resides in the nucleus. Functionally, component of the Mediator complex, a coactivator involved in the regulated transcription of nearly all RNA polymerase II-dependent genes. Mediator functions as a bridge to convey information from gene-specific regulatory proteins to the basal RNA polymerase II transcription machinery. Mediator is recruited to promoters by direct interactions with regulatory proteins and serves as a scaffold for the assembly of a functional preinitiation complex with RNA polymerase II and the general transcription factors. The polypeptide is Mediator of RNA polymerase II transcription subunit 14 (RGR1) (Chaetomium globosum (strain ATCC 6205 / CBS 148.51 / DSM 1962 / NBRC 6347 / NRRL 1970) (Soil fungus)).